The following is a 117-amino-acid chain: Carboxysome shell protein CcmK4 (117 aa).

One can recognise a BMC domain in the interval 5-91 (AVGSLETKGF…PHENVECVLP (87 aa)).

The protein belongs to the bacterial microcompartments protein family. CcmK subfamily. As to quaternary structure, crystallizes as a homohexamer. Interacts stably with CcmK3, forming heterohexamers that can make dodecamers. Heterohexamers have a 1:2 CcmK3:CcmK4 stoichiometry. Upon expression in E.coli forms large aggregates.

It localises to the carboxysome. Its function is as follows. A probably essential, minor shell protein of the carboxysome, a polyhedral inclusion where RuBisCO (ribulose bisphosphate carboxylase, rbcL-rbcS) is sequestered. Hexamers form sheets that form the facets of the polyhedral carboxysome. In PCC 7418 there are several CcmK paralogs with presumably functional differences. This subunit can probably make both homohexamers and heterohexamers with CcmK3. Both hexamers can also make dodecamers, formation depends on buffer conditions. The protein is Carboxysome shell protein CcmK4 of Halothece sp. (strain PCC 7418) (Synechococcus sp. (strain PCC 7418)).